The primary structure comprises 131 residues: MKKHGMLNSHIAKVLADLGHTDLIAIADAGLPVPDGAPKIDLSLTAGVPAFRDVTSLVAGEMAVEKVIAASEIKDANPENASFIESHFSAQTIEYMSHEEFKRLTQKAKAVIRTGEMTPYANCILQAGVIF.

The active-site Proton donor is the His-20. Substrate contacts are provided by residues Asp-28, His-98, and 120-122 (YAN).

Belongs to the RbsD / FucU family. RbsD subfamily. As to quaternary structure, homodecamer.

It localises to the cytoplasm. The enzyme catalyses beta-D-ribopyranose = beta-D-ribofuranose. Its pathway is carbohydrate metabolism; D-ribose degradation; D-ribose 5-phosphate from beta-D-ribopyranose: step 1/2. Functionally, catalyzes the interconversion of beta-pyran and beta-furan forms of D-ribose. This Bacillus velezensis (strain DSM 23117 / BGSC 10A6 / LMG 26770 / FZB42) (Bacillus amyloliquefaciens subsp. plantarum) protein is D-ribose pyranase.